The sequence spans 498 residues: Probable malate:quinone oxidoreductase (498 aa).

Belongs to the MQO family. FAD serves as cofactor.

It carries out the reaction (S)-malate + a quinone = a quinol + oxaloacetate. The protein operates within carbohydrate metabolism; tricarboxylic acid cycle; oxaloacetate from (S)-malate (quinone route): step 1/1. The chain is Probable malate:quinone oxidoreductase from Prochlorococcus marinus (strain MIT 9312).